A 439-amino-acid polypeptide reads, in one-letter code: Xylose isomerase (439 aa).

Catalysis depends on residues H98 and D101. Positions 229, 265, 268, 293, 304, 306, and 335 each coordinate Mg(2+).

This sequence belongs to the xylose isomerase family. Homotetramer. It depends on Mg(2+) as a cofactor.

It localises to the cytoplasm. The catalysed reaction is alpha-D-xylose = alpha-D-xylulofuranose. Functionally, involved in D-xylose catabolism. This Staphylococcus xylosus protein is Xylose isomerase (xylA).